A 364-amino-acid polypeptide reads, in one-letter code: mRNA decay activator protein ZFP36L2-B (364 aa).

A compositionally biased stretch (basic and acidic residues) spans 102 to 111 (SFSENGERSQ). The disordered stretch occupies residues 102–129 (SFSENGERSQHLLHLQQQQQQQKAGAQV). The segment covering 113 to 123 (LLHLQQQQQQQ) has biased composition (low complexity). An RNA-binding motif is present at residues 133–138 (RYKTEL). 2 C3H1-type zinc fingers span residues 133-161 (RYKT…HGFH) and 171-199 (KYKT…HNAE). Residues 150–191 (YGEKCQFAHGFHELRSLTRHPKYKTELCRTFHTIGFCPYGPR) are RNA-binding. Residues 308-350 (SESPVFDAPPSPPDSLSDRDSYLSGSLSSGSLSGSDSPTLDSN) form a disordered region. Residues 329 to 348 (YLSGSLSSGSLSGSDSPTLD) are compositionally biased toward low complexity.

In terms of processing, phosphorylated. As to expression, remains unlocalized in the egg and early embryo. From stage 21 (late neurula), expressed around the pronephros in the anterior crests, pharyngeal arch, hindbrain, mesodermal tissues around the pronephros and tail-bud. This expression pattern is maintained up to the tadpole stage.

It is found in the nucleus. It localises to the cytoplasm. Zinc-finger RNA-binding protein that destabilizes several cytoplasmic AU-rich element (ARE)-containing mRNA transcripts by promoting their poly(A) tail removal or deadenylation, and hence provide a mechanism for attenuating protein synthesis. Acts as a 3'-untranslated region (UTR) ARE mRNA-binding adapter protein to communicate signaling events to the mRNA decay machinery. Functions by recruiting the CCR4-NOT deadenylase complex and probably other components of the cytoplasmic RNA decay machinery to the bound ARE-containing mRNAs, and hence promotes ARE-mediated mRNA deadenylation and decay processes. Binds to 3'-UTR ARE of numerous mRNAs. Also induces the degradation of ARE-containing mRNAs even in absence of poly(A) tail. Required for tubulogenesis during pronephros development. This chain is mRNA decay activator protein ZFP36L2-B (zfp36l2-B), found in Xenopus laevis (African clawed frog).